The sequence spans 124 residues: Fluoride-specific ion channel FluC (124 aa).

A run of 4 helical transmembrane segments spans residues 4–24 (LLFV…MSII), 35–55 (FGTL…YALG), 62–82 (PELK…FSTF), and 95–115 (WFKS…MVYL). Residues Gly74 and Thr77 each coordinate Na(+).

Belongs to the fluoride channel Fluc/FEX (TC 1.A.43) family.

Its subcellular location is the cell inner membrane. It carries out the reaction fluoride(in) = fluoride(out). Its activity is regulated as follows. Na(+) is not transported, but it plays an essential structural role and its presence is essential for fluoride channel function. In terms of biological role, fluoride-specific ion channel. Important for reducing fluoride concentration in the cell, thus reducing its toxicity. The polypeptide is Fluoride-specific ion channel FluC (Shewanella denitrificans (strain OS217 / ATCC BAA-1090 / DSM 15013)).